The primary structure comprises 490 residues: Glutamyl-tRNA(Gln) amidotransferase subunit A (490 aa).

Active-site charge relay system residues include K79 and S154. S178 functions as the Acyl-ester intermediate in the catalytic mechanism.

Belongs to the amidase family. GatA subfamily. In terms of assembly, heterotrimer of A, B and C subunits.

The catalysed reaction is L-glutamyl-tRNA(Gln) + L-glutamine + ATP + H2O = L-glutaminyl-tRNA(Gln) + L-glutamate + ADP + phosphate + H(+). In terms of biological role, allows the formation of correctly charged Gln-tRNA(Gln) through the transamidation of misacylated Glu-tRNA(Gln) in organisms which lack glutaminyl-tRNA synthetase. The reaction takes place in the presence of glutamine and ATP through an activated gamma-phospho-Glu-tRNA(Gln). This is Glutamyl-tRNA(Gln) amidotransferase subunit A from Roseiflexus castenholzii (strain DSM 13941 / HLO8).